A 336-amino-acid chain; its full sequence is MNLSEYLAQADALAAECHALLAGLDVATRLDVAKGQLNALKDDRLNALQSALRMLPAEDRRAAGGAFNTLKQSIQAALDAFGQRQSAASGVVQVDATMPARGIWRGSLHPVTLVIDEISEIFRELGFTIALGPEAETEWYNFGALNFPPDHPAMELHDTLYLGEDTLLRTHTSPVQVRTLQRYAPPVRVLAPGQVYRRDFFDATHAPAFMQLEGLAVDEGVSFVDLKATLAEFARRFYGATRRVRFGPSYFPFVEPGAQMDVEVDLGDGKGLRWVEILGCGMVHPNVIEAAGLDSEKYTGWAFGMGPARIAMSRYGINDIRVLYDSDVRFLEQFAR.

Glu-255 contacts Mg(2+).

It belongs to the class-II aminoacyl-tRNA synthetase family. Phe-tRNA synthetase alpha subunit type 1 subfamily. As to quaternary structure, tetramer of two alpha and two beta subunits. The cofactor is Mg(2+).

It localises to the cytoplasm. The enzyme catalyses tRNA(Phe) + L-phenylalanine + ATP = L-phenylalanyl-tRNA(Phe) + AMP + diphosphate + H(+). This is Phenylalanine--tRNA ligase alpha subunit from Gemmatimonas aurantiaca (strain DSM 14586 / JCM 11422 / NBRC 100505 / T-27).